Here is a 120-residue protein sequence, read N- to C-terminus: Large ribosomal subunit protein eL8 (120 aa).

This sequence belongs to the eukaryotic ribosomal protein eL8 family. In terms of assembly, part of the 50S ribosomal subunit. Probably part of the RNase P complex.

It localises to the cytoplasm. Multifunctional RNA-binding protein that recognizes the K-turn motif in ribosomal RNA, the RNA component of RNase P, box H/ACA, box C/D and box C'/D' sRNAs. In Methanosarcina acetivorans (strain ATCC 35395 / DSM 2834 / JCM 12185 / C2A), this protein is Large ribosomal subunit protein eL8.